Here is a 127-residue protein sequence, read N- to C-terminus: Large ribosomal subunit protein uL22 (127 aa).

This sequence belongs to the universal ribosomal protein uL22 family. Part of the 50S ribosomal subunit.

Functionally, this protein binds specifically to 23S rRNA; its binding is stimulated by other ribosomal proteins, e.g. L4, L17, and L20. It is important during the early stages of 50S assembly. It makes multiple contacts with different domains of the 23S rRNA in the assembled 50S subunit and ribosome. In terms of biological role, the globular domain of the protein is located near the polypeptide exit tunnel on the outside of the subunit, while an extended beta-hairpin is found that lines the wall of the exit tunnel in the center of the 70S ribosome. The protein is Large ribosomal subunit protein uL22 of Methylobacterium nodulans (strain LMG 21967 / CNCM I-2342 / ORS 2060).